Reading from the N-terminus, the 217-residue chain is Resolvase homolog YneB (217 aa).

The Resolvase/invertase-type recombinase catalytic domain maps to 2 to 147 (KALIYARVST…RGMKRAVKNG (146 aa)). Ser-10 serves as the catalytic O-(5'-phospho-DNA)-serine intermediate.

It belongs to the site-specific recombinase resolvase family.

The protein is Resolvase homolog YneB (yneB) of Bacillus subtilis (strain 168).